A 310-amino-acid polypeptide reads, in one-letter code: Ribosomal protein L11 methyltransferase (310 aa).

4 residues coordinate S-adenosyl-L-methionine: T153, G174, D196, and N239.

Belongs to the methyltransferase superfamily. PrmA family.

It is found in the cytoplasm. It catalyses the reaction L-lysyl-[protein] + 3 S-adenosyl-L-methionine = N(6),N(6),N(6)-trimethyl-L-lysyl-[protein] + 3 S-adenosyl-L-homocysteine + 3 H(+). Functionally, methylates ribosomal protein L11. This chain is Ribosomal protein L11 methyltransferase, found in Janthinobacterium sp. (strain Marseille) (Minibacterium massiliensis).